Here is a 464-residue protein sequence, read N- to C-terminus: NADH dehydrogenase [ubiquinone] flavoprotein 1, mitochondrial (464 aa).

A mitochondrion-targeting transit peptide spans 1 to 20 (MLAARRLLGGSLPSRVSVRF). Lysine 81 carries the N6-acetyllysine; alternate modification. Lysine 81 is modified (N6-succinyllysine; alternate). 87-96 (GRGGAGFPTG) is an NADH binding site. Residue lysine 104 is modified to N6-acetyllysine. 199-247 (RGAGAYICGEETALIESIEGKQGKPRLKPPFPADVGVFGCPTTVANVET) is a binding site for FMN. Position 257 is an omega-N-methylarginine (arginine 257). Lysine 375 carries the N6-acetyllysine modification. Positions 379, 382, 385, and 425 each coordinate [4Fe-4S] cluster.

It belongs to the complex I 51 kDa subunit family. As to quaternary structure, core subunit of respiratory chain NADH dehydrogenase (Complex I) which is composed of 45 different subunits. This is a component of the flavoprotein-sulfur (FP) fragment of the enzyme. Interacts with RAB5IF. Requires FMN as cofactor. [4Fe-4S] cluster serves as cofactor.

Its subcellular location is the mitochondrion inner membrane. The enzyme catalyses a ubiquinone + NADH + 5 H(+)(in) = a ubiquinol + NAD(+) + 4 H(+)(out). In terms of biological role, core subunit of the mitochondrial membrane respiratory chain NADH dehydrogenase (Complex I) which catalyzes electron transfer from NADH through the respiratory chain, using ubiquinone as an electron acceptor. Part of the peripheral arm of the enzyme, where the electrons from NADH are accepted by flavin mononucleotide (FMN) and then passed along a chain of iron-sulfur clusters by electron tunnelling to the final acceptor ubiquinone. Contains FMN, which is the initial electron acceptor as well as one iron-sulfur cluster. This chain is NADH dehydrogenase [ubiquinone] flavoprotein 1, mitochondrial, found in Macaca fascicularis (Crab-eating macaque).